Consider the following 336-residue polypeptide: Phospho-N-acetylmuramoyl-pentapeptide-transferase (336 aa).

A run of 10 helical transmembrane segments spans residues 3–23 (LTLI…PYFI), 53–73 (GGTV…LFSI), 78–98 (SLAL…IGFL), 118–138 (LALQ…PSGI), 143–163 (VFGY…FWVV), 174–194 (GIDG…GVIA), 200–220 (FDVL…FCFN), 226–246 (VFMG…ISIA), 251–271 (WTLL…MLQV), and 316–336 (AFLW…LYVF).

This sequence belongs to the glycosyltransferase 4 family. MraY subfamily. Requires Mg(2+) as cofactor.

The protein localises to the cell membrane. The catalysed reaction is UDP-N-acetyl-alpha-D-muramoyl-L-alanyl-gamma-D-glutamyl-L-lysyl-D-alanyl-D-alanine + di-trans,octa-cis-undecaprenyl phosphate = Mur2Ac(oyl-L-Ala-gamma-D-Glu-L-Lys-D-Ala-D-Ala)-di-trans,octa-cis-undecaprenyl diphosphate + UMP. It functions in the pathway cell wall biogenesis; peptidoglycan biosynthesis. Its function is as follows. Catalyzes the initial step of the lipid cycle reactions in the biosynthesis of the cell wall peptidoglycan: transfers peptidoglycan precursor phospho-MurNAc-pentapeptide from UDP-MurNAc-pentapeptide onto the lipid carrier undecaprenyl phosphate, yielding undecaprenyl-pyrophosphoryl-MurNAc-pentapeptide, known as lipid I. This is Phospho-N-acetylmuramoyl-pentapeptide-transferase from Streptococcus pyogenes serotype M3 (strain ATCC BAA-595 / MGAS315).